A 155-amino-acid chain; its full sequence is RNA pyrophosphohydrolase (155 aa).

The region spanning K5–A147 is the Nudix hydrolase domain. Residues G42 to G63 carry the Nudix box motif.

This sequence belongs to the Nudix hydrolase family. RppH subfamily. It depends on a divalent metal cation as a cofactor.

In terms of biological role, accelerates the degradation of transcripts by removing pyrophosphate from the 5'-end of triphosphorylated RNA, leading to a more labile monophosphorylated state that can stimulate subsequent ribonuclease cleavage. This is RNA pyrophosphohydrolase from Helicobacter pylori (strain HPAG1).